The following is a 1259-amino-acid chain: Autism susceptibility gene 2 protein (1259 aa).

Disordered stretches follow at residues 1–87 (MDGP…EEDI), 108–285 (LKPQ…QDCC), 299–470 (CPQV…PPPP), 771–1027 (PNSM…MTVG), and 1119–1146 (REPHDYSHHHHHHHHPLSVDPRREHERG). The segment covering 8–17 (HGLRKKRRSR) has biased composition (basic residues). Residues 28–41 (GGLGAGAAGGGGAG) are compositionally biased toward gly residues. Residues 108-118 (LKPQERVEKRQ) show a composition bias toward basic and acidic residues. A compositionally biased stretch (basic residues) spans 136-147 (HSKKSRLSHPHH). Positions 148–158 (YSSDRENDRNL) are enriched in basic and acidic residues. The span at 177–192 (PGQNSCRDSDSESASG) shows a compositional bias: polar residues. Over residues 276–285 (RSQEKSQDCC) the composition is skewed to basic and acidic residues. The segment at 289-472 (IFEPVVLKDP…PTALPPPPPL (184 aa)) is important for regulation of lamellipodia formation. 2 stretches are compositionally biased toward pro residues: residues 331–345 (PPQPPPLSTQPPQGP) and 353–365 (APQPQVQRPPRPQ). Residues 386–410 (SLSQPLSAYNSSSLSLNSLSSSRSS) are compositionally biased toward low complexity. Residues 436–447 (PNHSPLHSFTPT) are compositionally biased toward polar residues. Residues 801–810 (PSFPTPPPWL) show a composition bias toward pro residues. Composition is skewed to basic and acidic residues over residues 813 to 850 (GELERSASAAAHDRDRDVDKRDSSVSKDDKERESVEKR), 876 to 935 (IRAH…EAKQ), and 960 to 993 (REAEPRKGEPAYENPKKSSEVKVKEERKEDHDLP). Basic residues predominate over residues 1125–1134 (SHHHHHHHHP). Residues Ser1198 and Ser1233 each carry the phosphoserine modification. The segment at 1217 to 1259 (LSAPPPLISTLGGRPVSPRRTTPLSAEIRERPPSHTLKDIEAR) is disordered. Basic and acidic residues predominate over residues 1243–1259 (EIRERPPSHTLKDIEAR).

Belongs to the AUTS2 family. As to quaternary structure, component of a PRC1-like complex that contains PCGF5, RNF2, CSNK2B, RYBP and AUTS2. Within this complex, interacts directly with PCGF5 and CSNK2B. Interacts with the histone acetyltransferase EP300/p300. Interacts (via Pro-rich region) with PREX1, DOCK1 and ELMO2. In terms of tissue distribution, strongly expressed in brain, skeletal muscle and kidney. Also expressed in placenta, lung and leukocytes.

It is found in the nucleus. It localises to the cytoplasm. The protein localises to the cytoskeleton. Its subcellular location is the cell projection. The protein resides in the growth cone. In terms of biological role, component of a Polycomb group (PcG) multiprotein PRC1-like complex, a complex class required to maintain the transcriptionally repressive state of many genes, including Hox genes, throughout development. PcG PRC1 complex acts via chromatin remodeling and modification of histones; it mediates monoubiquitination of histone H2A 'Lys-119', rendering chromatin heritably changed in its expressibility. The PRC1-like complex that contains PCGF5, RNF2, CSNK2B, RYBP and AUTS2 has decreased histone H2A ubiquitination activity, due to the phosphorylation of RNF2 by CSNK2B. As a consequence, the complex mediates transcriptional activation. In the cytoplasm, plays a role in axon and dendrite elongation and in neuronal migration during embryonic brain development. Promotes reorganization of the actin cytoskeleton, lamellipodia formation and neurite elongation via its interaction with RAC guanine nucleotide exchange factors, which then leads to the activation of RAC1. This is Autism susceptibility gene 2 protein (AUTS2) from Homo sapiens (Human).